We begin with the raw amino-acid sequence, 353 residues long: Fasciclin-like arabinogalactan protein 21 (353 aa).

Positions 1–28 (MGCCSSDCFVYFILSIALAFMAISTTLR) are cleaved as a signal peptide. N-linked (GlcNAc...) asparagine glycans are attached at residues Asn-51, Asn-81, Asn-94, Asn-200, Asn-249, and Asn-315. Residues 83 to 181 (TLFAIEDASF…HGVIGPFSPL (99 aa)) enclose the FAS1 1 domain. One can recognise an FAS1 2 domain in the interval 254–352 (TILATPNLVS…GISHTLEIPH (99 aa)).

This sequence belongs to the fasciclin-like AGP family.

Its subcellular location is the secreted. In terms of biological role, may be a cell surface adhesion protein. This Arabidopsis thaliana (Mouse-ear cress) protein is Fasciclin-like arabinogalactan protein 21 (FLA21).